The sequence spans 284 residues: MSNLPTSTPVSPSNLAEENPKSNNPESSEIEDANFVGKILNKDQFNLNEQFSSDIEWIIKYLDVMQGVTVGLEKMCISGTSYHFSDKTEVPNSGWRYMPAYLKKVEFIKKNEAEANMIAELCEKMGHKEEQHFYDIKNVDHDSNIYTTTVFYCDKIKKMYSDVEKTVKTCNRRRKKVEKTQILPDLRDQCTKYHKAVHTLDEQCRELDNLKEYVRAGRHFHNRHFKQGLVVISALTAVRSGVIKEWMTRDSKRQQKKGKTTTVARSTNKKNKSMMGTVKDLKKK.

The segment covering Met1–Ser27 has biased composition (polar residues). Disordered regions lie at residues Met1–Glu29 and Thr248–Lys284.

This is an uncharacterized protein from Caenorhabditis elegans.